The chain runs to 596 residues: Nuclear receptor subfamily 2 group C member 2 (596 aa).

The residue at position 19 (S19) is a Phosphoserine; by MAPK. A Phosphoserine modification is found at S46. 2 positions are modified to phosphoserine; by MAPK: S55 and S68. S98 is modified (phosphoserine). A DNA-binding region (nuclear receptor) is located at residues 114–189; sequence VEYCVVCGDK…MGMKMESVQS (76 aa). 2 NR C4-type zinc fingers span residues 117–137 and 153–177; these read CVVC…CEGC and CRSN…LKKC. Residue K192 forms a Glycyl lysine isopeptide (Lys-Gly) (interchain with G-Cter in SUMO2) linkage. S219 is subject to Phosphoserine. K231 carries the N6-acetyllysine modification. One can recognise an NR LBD domain in the interval 341–583; it reads GSIHVISRDQ…SIIPYILKME (243 aa).

This sequence belongs to the nuclear hormone receptor family. NR2 subfamily. Homodimer; can bind DNA as homodimer. Heterodimer; binds DNA as a heterodimer with NR2C1 required for chromatin remodeling and for binding to promoter regions such as globin DR1 repeats. Interacts with PCAF; the interaction preferentially occurs on the non-phosphorylated form and induces NR2C2-mediated transactivation activity and does not require the ligand-binding domain. Interacts (MAPK-mediated phosphorylated form) with NRIP1; the interaction promotes repression of NR2C2-mediated activity. Interacts with NR2C2AP; the interaction represses selective NR2C2-mediated transcriptional activity. Interacts with NLRP10. Interacts (via ligand-binding region) with transcriptional corepressor JAZF1; the interaction promotes NR2C2-mediated transcriptional repression. Post-translationally, phosphorylation on Ser-19 and Ser-68 is an important regulator of NR2C2-mediated transcriptional activity. Phosphorylation on these residues recruits the corepressor, NRIP1, leading to transcripional repression, whereas the non-phosphorylated form preferentially recruits the coactivator, PCAF.

Its subcellular location is the nucleus. Its function is as follows. Orphan nuclear receptor that can act as a repressor or activator of transcription. An important repressor of nuclear receptor signaling pathways such as retinoic acid receptor, retinoid X, vitamin D3 receptor, thyroid hormone receptor and estrogen receptor pathways. May regulate gene expression during the late phase of spermatogenesis. Together with NR2C1, forms the core of the DRED (direct repeat erythroid-definitive) complex that represses embryonic and fetal globin transcription including that of GATA1. Binds to hormone response elements (HREs) consisting of two 5'-AGGTCA-3' half site direct repeat consensus sequences. Plays a fundamental role in early embryonic development and embryonic stem cells. Required for normal spermatogenesis and cerebellum development. Appears to be important for neurodevelopmentally regulated behavior. Activates transcriptional activity of LHCG. Antagonist of PPARA-mediated transactivation. The sequence is that of Nuclear receptor subfamily 2 group C member 2 (NR2C2) from Homo sapiens (Human).